Reading from the N-terminus, the 883-residue chain is MNEQYSALRSNVSMLGKVLGETIKDALGEHILDRVETIRKLSKSSRAGNEANRQELLTTLQNLSNDELLPVARAFSQFLNLANTAEQYHSISPKGEAASNPEVIARTLRKLKNQPDLNDATIKKAVESLSLELVLTAHPTEITRRTLIHKMGEINNCLKQLDNTDIADYERHQVMRRLRQLIAQSWHTDEIRKQRPSPVDEAKWGFAVVENSLWQGVPNYLRELNEQLEENLGYKLPVDFVPVRFTSWMGGDRDGNPNVTADITRHVLLLSRWKATDLFLKDIHVLVSELSMVDATPELLALVGEEGASEPYRYLMKKLRARLMATQSWLEARLKGEKLPKPDGLLTQNEQLWEPLYACYQSLQACGMGIIANGELLDTLRRVKCFGVPLVRIDIRQESTRHTEALGEITRYLGIGDYESWSEADKQAFLIRELNSKRPLLPRNWEPSNDTREVLETCKVIAEAPKGSIAAYVISMAKTPSDVLAVHLLLKEAGIGFAMPVAPLFETLDDLNNADDVMTQLLNIDWYRGLIQGKQMVMIGYSDSAKDAGVMAASWAQYQAQDALIKTCEKAGIELTLFHGRGGSIGRGGAPAHAALLSQPPGSLKGGLRVTEQGEMIRFKYGLPEVTVSSLSLYTSAILEANLLPPPEPKDSWRHIMDELSVISCETYRGYVRENKDFVPYFRSATPEQELGKLPLGSRPAKRRPTGGVESLRAIPWIFAWTQNRLMLPAWLGAGTALQKVVEDGKQSELEAMCRDWPFFSTRLGMLEMVFSKADLWLADYYDQRLVAKTLWPLGKELRDLLEEDIKVVLAIANDSHLMADLPWIAESIQLRNVYTDPLNVLQAELLYRSRLTEEQGKSPDPRVEQALMVTIAGVAAGMRNTG.

Residues His138 and Lys546 contribute to the active site.

Belongs to the PEPCase type 1 family. Mg(2+) is required as a cofactor.

It catalyses the reaction oxaloacetate + phosphate = phosphoenolpyruvate + hydrogencarbonate. Functionally, forms oxaloacetate, a four-carbon dicarboxylic acid source for the tricarboxylic acid cycle. In Salmonella schwarzengrund (strain CVM19633), this protein is Phosphoenolpyruvate carboxylase.